The sequence spans 130 residues: Glycine cleavage system H protein (130 aa).

Positions 25-107 constitute a Lipoyl-binding domain; it reads IATIGITEFA…YGEGWFLKVR (83 aa). Residue Lys66 is modified to N6-lipoyllysine.

This sequence belongs to the GcvH family. The glycine cleavage system is composed of four proteins: P, T, L and H. Requires (R)-lipoate as cofactor.

In terms of biological role, the glycine cleavage system catalyzes the degradation of glycine. The H protein shuttles the methylamine group of glycine from the P protein to the T protein. The protein is Glycine cleavage system H protein of Nostoc sp. (strain PCC 7120 / SAG 25.82 / UTEX 2576).